We begin with the raw amino-acid sequence, 148 residues long: CDC25-like phosphatase YCH1 (148 aa).

Met-1 bears the N-acetylmethionine mark. The region spanning 29–137 (LREPFQVVDV…WQSVYGDDES (109 aa)) is the Rhodanese domain.

This sequence belongs to the MPI phosphatase family.

It localises to the cytoplasm. The protein resides in the nucleus. Protein phosphatase. The protein is CDC25-like phosphatase YCH1 (YCH1) of Saccharomyces cerevisiae (strain ATCC 204508 / S288c) (Baker's yeast).